The following is an 89-amino-acid chain: Cell division protein FtsB (89 aa).

Residues M1–P3 lie on the Cytoplasmic side of the membrane. A helical membrane pass occupies residues I4–F21. Residues A22–K89 lie on the Periplasmic side of the membrane. Residues V29 to H62 are a coiled coil.

The protein belongs to the FtsB family. Part of a complex composed of FtsB, FtsL and FtsQ.

The protein localises to the cell inner membrane. Functionally, essential cell division protein. May link together the upstream cell division proteins, which are predominantly cytoplasmic, with the downstream cell division proteins, which are predominantly periplasmic. The polypeptide is Cell division protein FtsB (Coxiella burnetii (strain RSA 493 / Nine Mile phase I)).